Here is a 151-residue protein sequence, read N- to C-terminus: UPF0178 protein Shal_3046 (151 aa).

The protein belongs to the UPF0178 family.

The sequence is that of UPF0178 protein Shal_3046 from Shewanella halifaxensis (strain HAW-EB4).